We begin with the raw amino-acid sequence, 396 residues long: Tryptophan synthase beta chain (396 aa).

The residue at position 86 (Lys-86) is an N6-(pyridoxal phosphate)lysine.

Belongs to the TrpB family. In terms of assembly, tetramer of two alpha and two beta chains. Pyridoxal 5'-phosphate serves as cofactor.

The enzyme catalyses (1S,2R)-1-C-(indol-3-yl)glycerol 3-phosphate + L-serine = D-glyceraldehyde 3-phosphate + L-tryptophan + H2O. Its pathway is amino-acid biosynthesis; L-tryptophan biosynthesis; L-tryptophan from chorismate: step 5/5. Functionally, the beta subunit is responsible for the synthesis of L-tryptophan from indole and L-serine. This Yersinia pseudotuberculosis serotype O:1b (strain IP 31758) protein is Tryptophan synthase beta chain.